A 908-amino-acid chain; its full sequence is Protein translocase subunit SecA (908 aa).

Residues Gln-90, 108-112 (GEGKT), and Asp-503 each bind ATP. The segment covering 846-864 (AAAAEAPVAPAPQPAAAAP) has biased composition (low complexity). A disordered region spans residues 846–884 (AAAAEAPVAPAPQPAAAAPQPTPELVGAEAGEPDPAAWG). Residues Cys-892, Cys-894, Cys-903, and His-904 each coordinate Zn(2+).

The protein belongs to the SecA family. As to quaternary structure, monomer and homodimer. Part of the essential Sec protein translocation apparatus which comprises SecA, SecYEG and auxiliary proteins SecDF-YajC and YidC. Requires Zn(2+) as cofactor.

The protein localises to the cell inner membrane. It is found in the cytoplasm. It catalyses the reaction ATP + H2O + cellular proteinSide 1 = ADP + phosphate + cellular proteinSide 2.. Its function is as follows. Part of the Sec protein translocase complex. Interacts with the SecYEG preprotein conducting channel. Has a central role in coupling the hydrolysis of ATP to the transfer of proteins into and across the cell membrane, serving both as a receptor for the preprotein-SecB complex and as an ATP-driven molecular motor driving the stepwise translocation of polypeptide chains across the membrane. In Cereibacter sphaeroides (strain ATCC 17029 / ATH 2.4.9) (Rhodobacter sphaeroides), this protein is Protein translocase subunit SecA.